The following is a 556-amino-acid chain: Putative cysteine ligase BshC (556 aa).

2 coiled-coil regions span residues I408 to A442 and L468 to T513.

Belongs to the BshC family.

Functionally, involved in bacillithiol (BSH) biosynthesis. May catalyze the last step of the pathway, the addition of cysteine to glucosamine malate (GlcN-Mal) to generate BSH. In Symbiobacterium thermophilum (strain DSM 24528 / JCM 14929 / IAM 14863 / T), this protein is Putative cysteine ligase BshC.